A 354-amino-acid chain; its full sequence is NADH-quinone oxidoreductase subunit H 2 (354 aa).

The next 8 membrane-spanning stretches (helical) occupy residues Ile-4 to Thr-24, Ile-81 to Gly-101, Ile-130 to Gly-150, Val-170 to Phe-190, Gly-201 to Leu-221, Val-269 to Leu-289, Leu-296 to Val-316, and Trp-333 to Leu-353.

The protein belongs to the complex I subunit 1 family. In terms of assembly, NDH-1 is composed of 14 different subunits. Subunits NuoA, H, J, K, L, M, N constitute the membrane sector of the complex.

The protein resides in the cell inner membrane. The catalysed reaction is a quinone + NADH + 5 H(+)(in) = a quinol + NAD(+) + 4 H(+)(out). In terms of biological role, NDH-1 shuttles electrons from NADH, via FMN and iron-sulfur (Fe-S) centers, to quinones in the respiratory chain. The immediate electron acceptor for the enzyme in this species is believed to be ubiquinone. Couples the redox reaction to proton translocation (for every two electrons transferred, four hydrogen ions are translocated across the cytoplasmic membrane), and thus conserves the redox energy in a proton gradient. This subunit may bind ubiquinone. In Koribacter versatilis (strain Ellin345), this protein is NADH-quinone oxidoreductase subunit H 2.